Here is a 790-residue protein sequence, read N- to C-terminus: MEMGVMENLMVHTEISKVKSQSNGEVEKRGVSVLENGGVCKLDRMSGLKFKRRKVFAVRDFPPGCGSRAMEVKIACENGNVVEDVKVVESLVKEEESLGQRDASENVSDIRMAEPVEVQPLRICLPGGDVVRDLSVTAGDECSNSEQIVAGSGVSSSSGTENIVRDIVVYADESSLGMDNLDQTQPLEIEMSDVAVAKPRLVAGRKKAKKGIACHSSLKVVSREFGEGSRKKKSKKNLYWRDRESLDSPEQLRILGVGTSSGSSSGDSSRNKVKETLRLFHGVCRKILQEDEAKPEDQRRKGKGLRIDFEASTILKRNGKFLNSGVHILGEVPGVEVGDEFQYRMELNILGIHKPSQAGIDYMKYGKAKVATSIVASGGYDDHLDNSDVLTYTGQGGNVMQVKKKGEELKEPEDQKLITGNLALATSIEKQTPVRVIRGKHKSTHDKSKGGNYVYDGLYLVEKYWQQVGSHGMNVFKFQLRRIPGQPELSWVEVKKSKSKYREGLCKLDISEGKEQSPISAVNEIDDEKPPLFTYTVKLIYPDWCRPVPPKSCCCTTRCTEAEARVCACVEKNGGEIPYNFDGAIVGAKPTIYECGPLCKCPSSCYLRVTQHGIKLPLEIFKTKSRGWGVRCLKSIPIGSFICEYVGELLEDSEAERRIGNDEYLFDIGNRYDNSLAQGMSELMLGTQAGRSMAEGDESSGFTIDAASKGNVGRFINHSCSPNLYAQNVLYDHEDSRIPHVMFFAQDNIPPLQELCYDYNYALDQVRDSKGNIKQKPCFCGAAVCRRRLY.

Positions 251–271 (QLRILGVGTSSGSSSGDSSRN) are disordered. Positions 256–268 (GVGTSSGSSSGDS) are enriched in low complexity. Residues 330–482 (GEVPGVEVGD…MNVFKFQLRR (153 aa)) form the YDG domain. The Pre-SET domain maps to 551 to 613 (KSCCCTTRCT…SCYLRVTQHG (63 aa)). Residues cysteine 553, cysteine 554, cysteine 555, cysteine 559, cysteine 567, cysteine 569, cysteine 595, cysteine 599, cysteine 601, and cysteine 605 each coordinate Zn(2+). The SET domain occupies 616 to 760 (LPLEIFKTKS…PLQELCYDYN (145 aa)). Residues 626-628 (RGW), aspartate 662, tyrosine 664, arginine 714, and 717-718 (NH) contribute to the S-adenosyl-L-methionine site. Residues cysteine 720, cysteine 778, cysteine 780, and cysteine 785 each coordinate Zn(2+). One can recognise a Post-SET domain in the interval 774–790 (KQKPCFCGAAVCRRRLY).

The protein belongs to the class V-like SAM-binding methyltransferase superfamily. Histone-lysine methyltransferase family. Suvar3-9 subfamily.

The protein resides in the nucleus. It localises to the chromosome. The protein localises to the centromere. It carries out the reaction N(6)-methyl-L-lysyl(9)-[histone H3] + S-adenosyl-L-methionine = N(6),N(6)-dimethyl-L-lysyl(9)-[histone H3] + S-adenosyl-L-homocysteine + H(+). The catalysed reaction is L-lysyl(9)-[histone H3] + S-adenosyl-L-methionine = N(6)-methyl-L-lysyl(9)-[histone H3] + S-adenosyl-L-homocysteine + H(+). Functionally, histone methyltransferase. Methylates 'Lys-9' of histone H3. H3 'Lys-9' methylation represents a specific tag for epigenetic transcriptional repression. Seems to act preferentially on dsMRNA. In Arabidopsis thaliana (Mouse-ear cress), this protein is Histone-lysine N-methyltransferase, H3 lysine-9 specific SUVH6 (SUVH6).